The following is a 357-amino-acid chain: Dual-specificity RNA methyltransferase RlmN (357 aa).

E89 serves as the catalytic Proton acceptor. The Radical SAM core domain maps to 109-340 (EGEKYTVCVS…CTIRESKALD (232 aa)). C116 and C345 form a disulfide bridge. [4Fe-4S] cluster contacts are provided by C123, C127, and C130. S-adenosyl-L-methionine is bound by residues 173–174 (GE), S203, 226–228 (SLH), and N302. C345 functions as the S-methylcysteine intermediate in the catalytic mechanism.

Belongs to the radical SAM superfamily. RlmN family. [4Fe-4S] cluster serves as cofactor.

It is found in the cytoplasm. It catalyses the reaction adenosine(2503) in 23S rRNA + 2 reduced [2Fe-2S]-[ferredoxin] + 2 S-adenosyl-L-methionine = 2-methyladenosine(2503) in 23S rRNA + 5'-deoxyadenosine + L-methionine + 2 oxidized [2Fe-2S]-[ferredoxin] + S-adenosyl-L-homocysteine. The catalysed reaction is adenosine(37) in tRNA + 2 reduced [2Fe-2S]-[ferredoxin] + 2 S-adenosyl-L-methionine = 2-methyladenosine(37) in tRNA + 5'-deoxyadenosine + L-methionine + 2 oxidized [2Fe-2S]-[ferredoxin] + S-adenosyl-L-homocysteine. Functionally, specifically methylates position 2 of adenine 2503 in 23S rRNA and position 2 of adenine 37 in tRNAs. m2A2503 modification seems to play a crucial role in the proofreading step occurring at the peptidyl transferase center and thus would serve to optimize ribosomal fidelity. The sequence is that of Dual-specificity RNA methyltransferase RlmN from Helicobacter pylori (strain HPAG1).